A 253-amino-acid polypeptide reads, in one-letter code: Claudin domain-containing protein 1 (253 aa).

A helical membrane pass occupies residues 5–25 (FATAFVIACVLSLISTIYMAA). Asparagine 42 and asparagine 72 each carry an N-linked (GlcNAc...) asparagine glycan. The next 3 membrane-spanning stretches (helical) occupy residues 141–161 (FLLP…GLCA), 175–195 (ILHL…VAGI), and 216–236 (FCLA…FIWA).

It belongs to the PMP-22/EMP/MP20 family. In the brain, highly expressed in endothelial cells of the cerebellum compared to other regions (at protein level).

The protein localises to the cell junction. It localises to the tight junction. It is found in the cell membrane. In terms of biological role, plays a role in negatively regulating the permeability of cells to small molecules. This is Claudin domain-containing protein 1 (Cldnd1) from Mus musculus (Mouse).